Here is a 102-residue protein sequence, read N- to C-terminus: Large ribosomal subunit protein bL21 (102 aa).

The protein belongs to the bacterial ribosomal protein bL21 family. As to quaternary structure, part of the 50S ribosomal subunit. Contacts protein L20.

This protein binds to 23S rRNA in the presence of protein L20. The protein is Large ribosomal subunit protein bL21 of Neisseria meningitidis serogroup A / serotype 4A (strain DSM 15465 / Z2491).